We begin with the raw amino-acid sequence, 886 residues long: DNA mismatch repair protein MutS (886 aa).

Gly641–Ser648 serves as a coordination point for ATP.

It belongs to the DNA mismatch repair MutS family.

This protein is involved in the repair of mismatches in DNA. It is possible that it carries out the mismatch recognition step. This protein has a weak ATPase activity. The protein is DNA mismatch repair protein MutS of Rickettsia felis (strain ATCC VR-1525 / URRWXCal2) (Rickettsia azadi).